The chain runs to 506 residues: Chromodomain Y-like protein 2 (506 aa).

Residues 7-67 enclose the Chromo domain; that stretch reads YEVERIVDKR…LHMSKDKRIK (61 aa). The tract at residues 64-177 is disordered; that stretch reads KRIKSGKQSS…RHFGNGSHQP (114 aa). Residues 88–98 are compositionally biased toward basic and acidic residues; sequence KLSHRPSDPGK. Positions 101-120 are enriched in basic residues; the sequence is GTSHKRKRINPPLAKPKKGY. Over residues 133–143 the composition is skewed to polar residues; it reads KTVSYRTTPSG.

As to quaternary structure, interacts (via chromo domain) with histone H3K9me3. Ubiquitously expressed.

It is found in the nucleus. This is Chromodomain Y-like protein 2 (CDYL2) from Homo sapiens (Human).